Reading from the N-terminus, the 35-residue chain is Photosystem II reaction center protein T (35 aa).

The helical transmembrane segment at 3–23 (ALVYTFLLVSTLGIIFFAIFF) threads the bilayer.

Belongs to the PsbT family. As to quaternary structure, PSII is composed of 1 copy each of membrane proteins PsbA, PsbB, PsbC, PsbD, PsbE, PsbF, PsbH, PsbI, PsbJ, PsbK, PsbL, PsbM, PsbT, PsbY, PsbZ, Psb30/Ycf12, at least 3 peripheral proteins of the oxygen-evolving complex and a large number of cofactors. It forms dimeric complexes.

The protein localises to the plastid. It is found in the chloroplast thylakoid membrane. Its function is as follows. Found at the monomer-monomer interface of the photosystem II (PS II) dimer, plays a role in assembly and dimerization of PSII. PSII is a light-driven water plastoquinone oxidoreductase, using light energy to abstract electrons from H(2)O, generating a proton gradient subsequently used for ATP formation. This Gossypium barbadense (Sea Island cotton) protein is Photosystem II reaction center protein T.